The sequence spans 197 residues: Small ribosomal subunit protein uS4B (197 aa).

The S4 RNA-binding domain occupies serine 88 to asparagine 150.

Belongs to the universal ribosomal protein uS4 family. As to quaternary structure, part of the 30S ribosomal subunit. Contacts protein S5. The interaction surface between S4 and S5 is involved in control of translational fidelity.

Functionally, one of the primary rRNA binding proteins, it binds directly to 16S rRNA where it nucleates assembly of the body of the 30S subunit. With S5 and S12 plays an important role in translational accuracy. This chain is Small ribosomal subunit protein uS4B, found in Clostridium perfringens (strain SM101 / Type A).